A 336-amino-acid chain; its full sequence is Dihydroorotate dehydrogenase (quinone) (336 aa).

FMN is bound by residues 62–66 (AGLDK) and Thr-86. A substrate-binding site is contributed by Lys-66. 111 to 115 (NRMGF) contributes to the substrate binding site. Asn-139 and Asn-172 together coordinate FMN. Asn-172 provides a ligand contact to substrate. The active-site Nucleophile is the Ser-175. Asn-177 serves as a coordination point for substrate. Residues Lys-217 and Thr-245 each contribute to the FMN site. Residue 246 to 247 (NT) coordinates substrate. Residues Gly-268, Gly-297, and 318–319 (YS) contribute to the FMN site.

The protein belongs to the dihydroorotate dehydrogenase family. Type 2 subfamily. As to quaternary structure, monomer. FMN is required as a cofactor.

Its subcellular location is the cell membrane. It catalyses the reaction (S)-dihydroorotate + a quinone = orotate + a quinol. Its pathway is pyrimidine metabolism; UMP biosynthesis via de novo pathway; orotate from (S)-dihydroorotate (quinone route): step 1/1. Catalyzes the conversion of dihydroorotate to orotate with quinone as electron acceptor. The chain is Dihydroorotate dehydrogenase (quinone) from Edwardsiella ictaluri (strain 93-146).